Reading from the N-terminus, the 256-residue chain is Imidazole glycerol phosphate synthase subunit HisF (256 aa).

Catalysis depends on residues Asp-12 and Asp-131.

This sequence belongs to the HisA/HisF family. As to quaternary structure, heterodimer of HisH and HisF.

It is found in the cytoplasm. It carries out the reaction 5-[(5-phospho-1-deoxy-D-ribulos-1-ylimino)methylamino]-1-(5-phospho-beta-D-ribosyl)imidazole-4-carboxamide + L-glutamine = D-erythro-1-(imidazol-4-yl)glycerol 3-phosphate + 5-amino-1-(5-phospho-beta-D-ribosyl)imidazole-4-carboxamide + L-glutamate + H(+). The protein operates within amino-acid biosynthesis; L-histidine biosynthesis; L-histidine from 5-phospho-alpha-D-ribose 1-diphosphate: step 5/9. IGPS catalyzes the conversion of PRFAR and glutamine to IGP, AICAR and glutamate. The HisF subunit catalyzes the cyclization activity that produces IGP and AICAR from PRFAR using the ammonia provided by the HisH subunit. The protein is Imidazole glycerol phosphate synthase subunit HisF of Pseudomonas fluorescens (strain SBW25).